Here is a 154-residue protein sequence, read N- to C-terminus: Spermatogenesis-associated protein 19, mitochondrial (154 aa).

Residues 1–24 (MIITTWIVYILARKGAGLPFPPKV) constitute a mitochondrion transit peptide. A phosphoserine mark is found at Ser26 and Ser116.

Its subcellular location is the mitochondrion outer membrane. It is found in the mitochondrion. It localises to the cell projection. The protein resides in the cilium. The protein localises to the flagellum. Its function is as follows. Essential for sperm motility and male fertility. Plays an important role in sperm motility by regulating the organization and function of the mitochondria and is also required for correct sperm midpiece assembly. The polypeptide is Spermatogenesis-associated protein 19, mitochondrial (SPATA19) (Bos taurus (Bovine)).